Consider the following 41-residue polypeptide: Diuretic hormone 1 (41 aa).

Ile-41 bears the Isoleucine amide mark.

The protein localises to the secreted. Regulation of fluid secretion. May stimulate primary urine secretion by Malpighian tubules and causes a dose-dependent stimulation of cAMP levels in the tubules. In Hyles lineata (White-lined sphinx moth), this protein is Diuretic hormone 1.